Consider the following 87-residue polypeptide: DNA-directed RNA polymerase subunit omega (87 aa).

It belongs to the RNA polymerase subunit omega family. In terms of assembly, the RNAP catalytic core consists of 2 alpha, 1 beta, 1 beta' and 1 omega subunit. When a sigma factor is associated with the core the holoenzyme is formed, which can initiate transcription.

It catalyses the reaction RNA(n) + a ribonucleoside 5'-triphosphate = RNA(n+1) + diphosphate. In terms of biological role, promotes RNA polymerase assembly. Latches the N- and C-terminal regions of the beta' subunit thereby facilitating its interaction with the beta and alpha subunits. This chain is DNA-directed RNA polymerase subunit omega, found in Acidothermus cellulolyticus (strain ATCC 43068 / DSM 8971 / 11B).